A 930-amino-acid polypeptide reads, in one-letter code: Isoleucine--tRNA ligase (930 aa).

Positions 57–67 (PYANGNIHVGH) match the 'HIGH' region motif. Glutamate 554 contributes to the L-isoleucyl-5'-AMP binding site. Residues 595 to 599 (KMSKS) carry the 'KMSKS' region motif. Lysine 598 contributes to the ATP binding site. Positions 888, 891, 908, and 911 each coordinate Zn(2+).

The protein belongs to the class-I aminoacyl-tRNA synthetase family. IleS type 1 subfamily. Monomer. Zn(2+) serves as cofactor.

Its subcellular location is the cytoplasm. The enzyme catalyses tRNA(Ile) + L-isoleucine + ATP = L-isoleucyl-tRNA(Ile) + AMP + diphosphate. Catalyzes the attachment of isoleucine to tRNA(Ile). As IleRS can inadvertently accommodate and process structurally similar amino acids such as valine, to avoid such errors it has two additional distinct tRNA(Ile)-dependent editing activities. One activity is designated as 'pretransfer' editing and involves the hydrolysis of activated Val-AMP. The other activity is designated 'posttransfer' editing and involves deacylation of mischarged Val-tRNA(Ile). This is Isoleucine--tRNA ligase from Streptococcus pneumoniae (strain CGSP14).